Consider the following 57-residue polypeptide: uncharacterized protein (57 aa).

The helical transmembrane segment at A34 to V54 threads the bilayer.

The protein resides in the membrane. This is an uncharacterized protein from Dictyostelium discoideum (Social amoeba).